Here is a 187-residue protein sequence, read N- to C-terminus: Elongation factor P (187 aa).

Belongs to the elongation factor P family.

The protein localises to the cytoplasm. The protein operates within protein biosynthesis; polypeptide chain elongation. Functionally, involved in peptide bond synthesis. Stimulates efficient translation and peptide-bond synthesis on native or reconstituted 70S ribosomes in vitro. Probably functions indirectly by altering the affinity of the ribosome for aminoacyl-tRNA, thus increasing their reactivity as acceptors for peptidyl transferase. The polypeptide is Elongation factor P (Rhodococcus jostii (strain RHA1)).